The primary structure comprises 542 residues: Chaperonin GroEL 1 (542 aa).

Residues 30 to 33 (TLGP), K51, 87 to 91 (DGTTT), G415, and D496 contribute to the ATP site.

Belongs to the chaperonin (HSP60) family. As to quaternary structure, forms a cylinder of 14 subunits composed of two heptameric rings stacked back-to-back. Interacts with the co-chaperonin GroES.

The protein localises to the cytoplasm. It carries out the reaction ATP + H2O + a folded polypeptide = ADP + phosphate + an unfolded polypeptide.. Its function is as follows. Together with its co-chaperonin GroES, plays an essential role in assisting protein folding. The GroEL-GroES system forms a nano-cage that allows encapsulation of the non-native substrate proteins and provides a physical environment optimized to promote and accelerate protein folding. In Sinorhizobium fredii (strain NBRC 101917 / NGR234), this protein is Chaperonin GroEL 1.